A 1706-amino-acid polypeptide reads, in one-letter code: Serine/threonine-protein kinase vps15 (1706 aa).

Residues 24–293 enclose the Protein kinase domain; that stretch reads YHNERSLGDS…YLQKYRGTVF (270 aa). ATP-binding positions include 30-38 and Lys-52; that span reads LGDSHFLRT. One copy of the HEAT 1 repeat lies at 56 to 94; it reads NKLPEISLSSIVNLLKEEQENISYRVPNAVPYIKTLVTL. The active-site Proton acceptor is the Asp-146. HEAT repeat units follow at residues 426–465, 466–504, 511–549, 587–625, 626–664, 665–703, and 705–743; these read LYGAAVLLPIVLSTIRHVNTRESKINALSLVQILSRNICD, ESKLDTVLPFVMTLLRDQYADVRISALITITRLVSNVTS, FLFQEYLFPDLQHFLFDMNSRTRATYASCLPILAKQASK, HDLVVTVERHVSTLLADSSSIVRRSLLNALAPLCVFFGK, AKSNDLILSHLITYLNDTDWMLRCAFFESITGLSIFIGP, RSVDEYILPLMLQALVDPEPAVLESVLGSFSGLIELHLF, and KLVVVDILQLVLPLVAVPNAYIRRAALSVIYSAYQSFDD. The residue at position 957 (Ser-957) is a Phosphoserine. Position 958 is a phosphotyrosine (Tyr-958). The segment at 982–1099 is disordered; sequence TTKPKDVSQS…GKSLAPLISS (118 aa). Basic and acidic residues-rich tracts occupy residues 984–1002 and 1014–1023; these read KPKDVSQSDIKVDINRESN and DVYRQTDNPE. A compositionally biased stretch (polar residues) spans 1029–1055; it reads DTASSKVDTHNPTVTQPTDDTGGLNSY. A compositionally biased stretch (low complexity) spans 1056–1069; sequence NTENPLLTNNTLEP. The segment covering 1079 to 1090 has biased composition (basic and acidic residues); sequence KDSDKHAKESKG. 2 WD repeats span residues 1213–1252 and 1368–1407; these read LLDGGTKKVLVSPDSSFFVTLGSDGVVRAWQLVESVRHIS and LQCGSATSVVVSEGCNWALIGTTKGWLLLWDLRFGTLSCS. Residues 1431–1442 are compositionally biased toward polar residues; sequence NEYTSGNNNSPV. The interval 1431-1461 is disordered; sequence NEYTSGNNNSPVTKVPGSSSTSSSSTQPINS. A WD 3 repeat occupies 1577 to 1622; the sequence is CISSPIYRYRGPSAGSVEREPLFLIAASGSPHAFIWNPHNVSASSS.

It belongs to the protein kinase superfamily. Ser/Thr protein kinase family. In terms of assembly, component of the autophagy-specific vps34 PI3-kinase complex I composed of vps15, atg6, pik3/vps34, atg14 and atg38. Also a component of the vps34 PI3-kinase complex II composed of atg6, pik3, vps15 and vps38.

It catalyses the reaction L-seryl-[protein] + ATP = O-phospho-L-seryl-[protein] + ADP + H(+). The enzyme catalyses L-threonyl-[protein] + ATP = O-phospho-L-threonyl-[protein] + ADP + H(+). Functionally, functions as a part of the autophagy-specific VPS34 PI3-kinase complex I that plays a role in autophagosome assembly. This complex is essential to recruit the atg8-phosphatidylinositol conjugate and the atg12-atg5 conjugate to the pre-autophagosomal structure. Also functions as part of the VPS34 PI3-kinase complex II. The polypeptide is Serine/threonine-protein kinase vps15 (Schizosaccharomyces pombe (strain 972 / ATCC 24843) (Fission yeast)).